Reading from the N-terminus, the 658-residue chain is Interferon-induced GTP-binding protein Mx1 (658 aa).

N-acetylmethionine is present on methionine 1. Positions 1 to 20 (MVNSKGKITDSDPGSSHLLL) are disordered. In terms of domain architecture, Dynamin-type G spans 65–338 (DLALPAIAVI…LITHICKTLP (274 aa)). The segment at 75 to 82 (GDQSSGKS) is G1 motif. A GTP-binding site is contributed by 75 to 82 (GDQSSGKS). The G2 motif stretch occupies residues 100-102 (VTR). The segment at 176 to 179 (DLPG) is G3 motif. Residues 176–180 (DLPGI) and 245–248 (TKPD) contribute to the GTP site. Residues 245–248 (TKPD) are G4 motif. The segment at 277 to 280 (KCRG) is G5 motif. The interval 339-364 (LLEKQIKENYEKITEELQKYGSDVPE) is bundle signaling element (BSE). Positions 364–531 (EEEHEKMFFL…HFQMEQIVYC (168 aa)) are middle domain. Residues 365 to 628 (EEHEKMFFLI…KDTHNWLLKE (264 aa)) form a stalk region. Residues 551–554 (KDKK) form a critical for lipid-binding region. The GED domain maps to 570–658 (LSDIFEHLLA…ARRRLAKFPG (89 aa)).

The protein belongs to the TRAFAC class dynamin-like GTPase superfamily. Dynamin/Fzo/YdjA family. As to quaternary structure, homooligomer. Oligomerizes into multimeric filamentous or ring-like structures by virtue of its stalk domain. Oligomerization is critical for GTPase activity, protein stability, and recognition of viral target structures. Interacts with TRPC1, TRPC3, TRPC4, TRPC5, TRPC6 and TRPC7. Interacts with HSPA5. Interacts with TUBB/TUBB5. Interacts with DDX39A and DDX39B. Post-translationally, ISGylated.

Its subcellular location is the cytoplasm. The protein localises to the endoplasmic reticulum membrane. It localises to the perinuclear region. In terms of biological role, interferon-induced dynamin-like GTPase with antiviral activity. The protein is Interferon-induced GTP-binding protein Mx1 (MX1) of Otaria byronia (South American sea lion).